Reading from the N-terminus, the 65-residue chain is Large ribosomal subunit protein bL35 (65 aa).

The interval 24–48 is disordered; that stretch reads RRKAGKSHLLEHKSSDKKRSMSKTT. Positions 31 to 42 are enriched in basic and acidic residues; sequence HLLEHKSSDKKR.

This sequence belongs to the bacterial ribosomal protein bL35 family.

The chain is Large ribosomal subunit protein bL35 from Nostoc punctiforme (strain ATCC 29133 / PCC 73102).